Here is a 68-residue protein sequence, read N- to C-terminus: Conotoxin Cal14.13c (68 aa).

The N-terminal stretch at 1–20 (MKLCVVXVLLMLAMPFNGGE) is a signal peptide. The propeptide occupies 21-68 (ASRFFNQHARSQRSGMKTRGIWCDPPCPEGETCRGGECSDEFNGDLGG). L66 bears the Leucine amide mark.

In terms of processing, contains 2 disulfide bonds. As to expression, expressed by the venom duct.

It is found in the secreted. Its function is as follows. Probable neurotoxin with unknown target. Possibly targets ion channels. This Californiconus californicus (California cone) protein is Conotoxin Cal14.13c.